The sequence spans 459 residues: Endoglucanase EG-1 (459 aa).

Residues 1-22 form the signal peptide; the sequence is MAPSVTLPLTTAILAIARLVAA. Gln-23 is subject to Pyrrolidone carboxylic acid. Residues 23–397 form a catalytic region; the sequence is QQPGTSTPEV…DIGSTTNSTA (375 aa). 8 cysteine pairs are disulfide-bonded: Cys-41-Cys-47, Cys-71-Cys-92, Cys-82-Cys-88, Cys-161-Cys-360, Cys-193-Cys-216, Cys-197-Cys-215, Cys-236-Cys-241, and Cys-246-Cys-315. Asn-78 carries an N-linked (GlcNAc) asparagine glycan. A glycan (N-linked (GlcNAc...) (high mannose) asparagine) is linked at Asn-204. Glu-218 serves as the catalytic Nucleophile. Glu-223 serves as the catalytic Proton donor/acceptor. The tract at residues 390–425 is disordered; that stretch reads GSTTNSTAPPPPPASSTTFSTTRRSSTTSSSPSCTQ. A glycan (N-linked (GlcNAc...) asparagine) is linked at Asn-394. The interval 398 to 423 is linker; that stretch reads PPPPPASSTTFSTTRRSSTTSSSPSC. Low complexity predominate over residues 404–425; the sequence is SSTTFSTTRRSSTTSSSPSCTQ. 3 disulfide bridges follow: Cys-423-Cys-439, Cys-431-Cys-448, and Cys-442-Cys-458. The 37-residue stretch at 423-459 folds into the CBM1 domain; it reads CTQTHWGQCGGIGYSGCKTCTSGTTCQYSNDYYSQCL.

This sequence belongs to the glycosyl hydrolase 7 (cellulase C) family. Post-translationally, asn-204 contains mainly a high-mannose-type glycan (Hex(7-9)GlcNAc(2)), with a small fraction (8%) bearing a single GlcNAc at this site.

The protein localises to the secreted. It carries out the reaction Endohydrolysis of (1-&gt;4)-beta-D-glucosidic linkages in cellulose, lichenin and cereal beta-D-glucans.. In terms of biological role, endoglucanase (EG) that cleaves the internal beta-1,4-glucosidic bonds in cellulose. The degradation of cellulose involves an interplay between different cellulolytic enzymes. Hydrolysis starts with EGs, which cut internal glycosidic linkages to reduce the polymerization degree of the substrate and creates new chain ends for exocellobiohydrolases (CBHs). The CBH release the disaccharide cellobiose from the non-reducing end of the cellulose polymer chain. Finally, beta-1,4-glucosidases hydrolyze the cellobiose and other short cello-oligosaccharides into glucose units. In Hypocrea jecorina (Trichoderma reesei), this protein is Endoglucanase EG-1 (egl1).